Here is a 574-residue protein sequence, read N- to C-terminus: Glutamyl-tRNA(Gln) amidotransferase subunit B, mitochondrial (574 aa).

Residues 1 to 12 constitute a mitochondrion transit peptide; the sequence is MIRQFVSHRGIP. Residues 34–62 form a disordered region; it reads PLGRKNWSTSDEAKSKRAAMRKGGAPPPE.

It belongs to the GatB/GatE family. GatB subfamily. Subunit of the heterotrimeric GatCAB amidotransferase (AdT) complex, composed of A, B and C subunits.

It is found in the mitochondrion. The enzyme catalyses L-glutamyl-tRNA(Gln) + L-glutamine + ATP + H2O = L-glutaminyl-tRNA(Gln) + L-glutamate + ADP + phosphate + H(+). In terms of biological role, allows the formation of correctly charged Gln-tRNA(Gln) through the transamidation of misacylated Glu-tRNA(Gln) in the mitochondria. The reaction takes place in the presence of glutamine and ATP through an activated gamma-phospho-Glu-tRNA(Gln). This Ajellomyces capsulatus (strain H143) (Darling's disease fungus) protein is Glutamyl-tRNA(Gln) amidotransferase subunit B, mitochondrial.